A 223-amino-acid chain; its full sequence is Noggin (223 aa).

An N-terminal signal peptide occupies residues 1–26 (MDHSQCLVTIYAAAVLLGLRLQQGSC). Asparagine 61 carries N-linked (GlcNAc...) asparagine glycosylation. Intrachain disulfides connect cysteine 146–cysteine 183, cysteine 169–cysteine 219, cysteine 175–cysteine 221, and cysteine 198–cysteine 206.

It belongs to the noggin family. Homodimer.

It localises to the secreted. Functionally, inhibitor of bone morphogenetic proteins (BMP) signaling. Controls somitogenesis by sequestering the BMP-4 activity which in turn differentiates distinct subtypes of the mesoderm along the mediolateral axis. This Gallus gallus (Chicken) protein is Noggin (NOG).